The sequence spans 165 residues: 3-isopropylmalate dehydratase small subunit (165 aa).

The protein belongs to the LeuD family. LeuD type 2 subfamily. In terms of assembly, heterodimer of LeuC and LeuD.

The enzyme catalyses (2R,3S)-3-isopropylmalate = (2S)-2-isopropylmalate. It functions in the pathway amino-acid biosynthesis; L-leucine biosynthesis; L-leucine from 3-methyl-2-oxobutanoate: step 2/4. Functionally, catalyzes the isomerization between 2-isopropylmalate and 3-isopropylmalate, via the formation of 2-isopropylmaleate. This Desulfovibrio desulfuricans (strain ATCC 27774 / DSM 6949 / MB) protein is 3-isopropylmalate dehydratase small subunit.